Reading from the N-terminus, the 174-residue chain is Larval cuticle protein LCP-22 (174 aa).

The signal sequence occupies residues 1-16 (MKFAVVFACMVAAVAA). A Chitin-binding type R&amp;R domain is found at 82–153 (DGSYTYFYET…PTGNAIPTSP (72 aa)).

Component of the cuticle of the larva of Bombyx mori. This Bombyx mori (Silk moth) protein is Larval cuticle protein LCP-22 (LCP22).